The following is a 203-amino-acid chain: Nascent polypeptide-associated complex subunit alpha-like protein 1 (203 aa).

Residues 1 to 23 are compositionally biased toward basic and acidic residues; that stretch reads MTTEEKEILAAKLEEQKIDLDKP. The disordered stretch occupies residues 1 to 71; it reads MTTEEKEILA…SEKKSRKAML (71 aa). Positions 24–50 are enriched in acidic residues; that stretch reads EVEDDDDNEDDDSDDDDKDDDEADGLD. At Ser-36 the chain carries Phosphoserine. Residues 60–125 form the NAC-A/B domain; it reads SRSEKKSRKA…AKIEDLSSQI (66 aa). The region spanning 158 to 203 is the UBA domain; it reads EVDEEGVEPKDIELVMTQAGVSRPNAVKALKAADGDIVSAIMELTT.

Belongs to the NAC-alpha family.

Its function is as follows. May promote appropriate targeting of ribosome-nascent polypeptide complexes. This chain is Nascent polypeptide-associated complex subunit alpha-like protein 1, found in Arabidopsis thaliana (Mouse-ear cress).